Consider the following 723-residue polypeptide: Catalase-peroxidase (723 aa).

The tryptophyl-tyrosyl-methioninium (Trp-Tyr) (with M-250) cross-link spans tryptophan 96–tyrosine 224. Histidine 97 functions as the Proton acceptor in the catalytic mechanism. Positions tyrosine 224–methionine 250 form a cross-link, tryptophyl-tyrosyl-methioninium (Tyr-Met) (with W-96). Histidine 265 lines the heme b pocket.

Belongs to the peroxidase family. Peroxidase/catalase subfamily. In terms of assembly, homodimer or homotetramer. Requires heme b as cofactor. Post-translationally, formation of the three residue Trp-Tyr-Met cross-link is important for the catalase, but not the peroxidase activity of the enzyme.

The catalysed reaction is H2O2 + AH2 = A + 2 H2O. It catalyses the reaction 2 H2O2 = O2 + 2 H2O. Its function is as follows. Bifunctional enzyme with both catalase and broad-spectrum peroxidase activity. This chain is Catalase-peroxidase, found in Leptothrix cholodnii (strain ATCC 51168 / LMG 8142 / SP-6) (Leptothrix discophora (strain SP-6)).